A 244-amino-acid polypeptide reads, in one-letter code: Short-chain dehydrogenase/reductase family member NovK (244 aa).

Residues 9 to 12 (GGGE), 59 to 60 (EL), and 154 to 158 (RPVLD) each bind NADP(+).

The protein belongs to the short-chain dehydrogenases/reductases (SDR) family. Heterotetramer; the NovJ(2)K(2) heterotetramer is composed of subunits of 2 NovJ and 2 subunits of NovK.

Its pathway is antibiotic biosynthesis; novobiocin biosynthesis. Non-catalytic subunit of the NovJ(2)K(2) heterotetramer that catalyzes the NADPH-dependent reduction of the tyrosyl moiety of L-beta-OH-Tyr-S-NovH intermediate to yield the tethered beta-ketotyrosyl-S-NovH in the novobiocin biosynthesis pathway. Novobiocin is an aminocoumarin family antibiotic that targets bacterial DNA gyrases. This is Short-chain dehydrogenase/reductase family member NovK (novK) from Streptomyces niveus (Streptomyces spheroides).